Here is a 162-residue protein sequence, read N- to C-terminus: ATP synthase subunit b (162 aa).

Residues 6–25 (TLFTLVTFLVLMLAVGKVAW) traverse the membrane as a helical segment.

The protein belongs to the ATPase B chain family. F-type ATPases have 2 components, F(1) - the catalytic core - and F(0) - the membrane proton channel. F(1) has five subunits: alpha(3), beta(3), gamma(1), delta(1), epsilon(1). F(0) has three main subunits: a(1), b(2) and c(10-14). The alpha and beta chains form an alternating ring which encloses part of the gamma chain. F(1) is attached to F(0) by a central stalk formed by the gamma and epsilon chains, while a peripheral stalk is formed by the delta and b chains.

It localises to the cell membrane. Its function is as follows. F(1)F(0) ATP synthase produces ATP from ADP in the presence of a proton or sodium gradient. F-type ATPases consist of two structural domains, F(1) containing the extramembraneous catalytic core and F(0) containing the membrane proton channel, linked together by a central stalk and a peripheral stalk. During catalysis, ATP synthesis in the catalytic domain of F(1) is coupled via a rotary mechanism of the central stalk subunits to proton translocation. In terms of biological role, component of the F(0) channel, it forms part of the peripheral stalk, linking F(1) to F(0). The sequence is that of ATP synthase subunit b from Lacticaseibacillus paracasei (strain ATCC 334 / BCRC 17002 / CCUG 31169 / CIP 107868 / KCTC 3260 / NRRL B-441) (Lactobacillus paracasei).